Reading from the N-terminus, the 502-residue chain is Bifunctional purine biosynthesis protein PurH (502 aa).

An MGS-like domain is found at 1–144; that stretch reads MKKRALISVF…KNFQDVVVIS (144 aa).

The protein belongs to the PurH family.

The enzyme catalyses (6R)-10-formyltetrahydrofolate + 5-amino-1-(5-phospho-beta-D-ribosyl)imidazole-4-carboxamide = 5-formamido-1-(5-phospho-D-ribosyl)imidazole-4-carboxamide + (6S)-5,6,7,8-tetrahydrofolate. It catalyses the reaction IMP + H2O = 5-formamido-1-(5-phospho-D-ribosyl)imidazole-4-carboxamide. It participates in purine metabolism; IMP biosynthesis via de novo pathway; 5-formamido-1-(5-phospho-D-ribosyl)imidazole-4-carboxamide from 5-amino-1-(5-phospho-D-ribosyl)imidazole-4-carboxamide (10-formyl THF route): step 1/1. Its pathway is purine metabolism; IMP biosynthesis via de novo pathway; IMP from 5-formamido-1-(5-phospho-D-ribosyl)imidazole-4-carboxamide: step 1/1. The chain is Bifunctional purine biosynthesis protein PurH from Clostridium beijerinckii (strain ATCC 51743 / NCIMB 8052) (Clostridium acetobutylicum).